The following is a 280-amino-acid chain: Urease accessory protein UreD 1 (280 aa).

It belongs to the UreD family. As to quaternary structure, ureD, UreF and UreG form a complex that acts as a GTP-hydrolysis-dependent molecular chaperone, activating the urease apoprotein by helping to assemble the nickel containing metallocenter of UreC. The UreE protein probably delivers the nickel.

It is found in the cytoplasm. In terms of biological role, required for maturation of urease via the functional incorporation of the urease nickel metallocenter. This Brucella abortus biovar 1 (strain 9-941) protein is Urease accessory protein UreD 1.